Reading from the N-terminus, the 530-residue chain is Bifunctional purine biosynthesis protein PurH (530 aa).

An MGS-like domain is found at 1 to 148; sequence MNNARPIRRA…KNHKDVTIVV (148 aa).

It belongs to the PurH family.

It carries out the reaction (6R)-10-formyltetrahydrofolate + 5-amino-1-(5-phospho-beta-D-ribosyl)imidazole-4-carboxamide = 5-formamido-1-(5-phospho-D-ribosyl)imidazole-4-carboxamide + (6S)-5,6,7,8-tetrahydrofolate. It catalyses the reaction IMP + H2O = 5-formamido-1-(5-phospho-D-ribosyl)imidazole-4-carboxamide. The protein operates within purine metabolism; IMP biosynthesis via de novo pathway; 5-formamido-1-(5-phospho-D-ribosyl)imidazole-4-carboxamide from 5-amino-1-(5-phospho-D-ribosyl)imidazole-4-carboxamide (10-formyl THF route): step 1/1. Its pathway is purine metabolism; IMP biosynthesis via de novo pathway; IMP from 5-formamido-1-(5-phospho-D-ribosyl)imidazole-4-carboxamide: step 1/1. In Vibrio vulnificus (strain YJ016), this protein is Bifunctional purine biosynthesis protein PurH.